Consider the following 91-residue polypeptide: Small ribosomal subunit protein uS19 (91 aa).

This sequence belongs to the universal ribosomal protein uS19 family.

Its function is as follows. Protein S19 forms a complex with S13 that binds strongly to the 16S ribosomal RNA. This chain is Small ribosomal subunit protein uS19, found in Lactobacillus delbrueckii subsp. bulgaricus (strain ATCC 11842 / DSM 20081 / BCRC 10696 / JCM 1002 / NBRC 13953 / NCIMB 11778 / NCTC 12712 / WDCM 00102 / Lb 14).